The following is a 377-amino-acid chain: MVRQLILVLSLILFCGSSHAVVSELARQSESAIQGLADIKMAPLRYLDVLFGGNPGGLRGLDGGNSASLSTLQAAKVANILARGDIASSGYSKISAGVGKGSDLITIIKNTRSYDPYLIPPGIPGYNYPLGWPLRYPLGPYWPNRPPWLPINSPPIRPGGLFPGGPSPGGPSPGEPSPGEPSPGGPSPGGPSPGGPSPGGPSPGGPSPGGPSPGGPFPGGSPPSPGGPLGPWQFPWILGGPRPNRPGRPFPGGILPGHLDGSVVPNSVLNVAGGIFGNGGLFGTGIFGQHGLFGTGFLSGPSLDPFGIFTPIGNFFGSLGNLFGFSSPSQIIPIFGGKFGPLGRGLQGSITLDVGGTVPSVKGILGQLLHPFLGFLG.

An N-terminal signal peptide occupies residues 1-20; the sequence is MVRQLILVLSLILFCGSSHA. The disordered stretch occupies residues 155–253; the sequence is PIRPGGLFPG…NRPGRPFPGG (99 aa). Residues 165–228 show a composition bias toward pro residues; that stretch reads GPSPGGPSPG…GGSPPSPGGP (64 aa).

In terms of tissue distribution, specifically expressed in the ejaculatory bulb and seminal fluid. Detected in mated females 3 minutes after the start of mating, and for at least 3 hours after the start of mating.

The protein localises to the secreted. In terms of biological role, major protein component of the posterior mating plug. Accessory gland proteins constitute, or are required for formation of the anterior mating plug. Posterior mating plug forms before sperm transfer and the anterior mating plug is formed after the start of mating. This Drosophila melanogaster (Fruit fly) protein is Ejaculatory bulb-specific protein 1.